The sequence spans 174 residues: Crossover junction endodeoxyribonuclease RuvC (174 aa).

Active-site residues include aspartate 8, glutamate 67, and aspartate 139. Residues aspartate 8, glutamate 67, and aspartate 139 each coordinate Mg(2+).

Belongs to the RuvC family. Homodimer which binds Holliday junction (HJ) DNA. The HJ becomes 2-fold symmetrical on binding to RuvC with unstacked arms; it has a different conformation from HJ DNA in complex with RuvA. In the full resolvosome a probable DNA-RuvA(4)-RuvB(12)-RuvC(2) complex forms which resolves the HJ. Mg(2+) is required as a cofactor.

Its subcellular location is the cytoplasm. It carries out the reaction Endonucleolytic cleavage at a junction such as a reciprocal single-stranded crossover between two homologous DNA duplexes (Holliday junction).. The RuvA-RuvB-RuvC complex processes Holliday junction (HJ) DNA during genetic recombination and DNA repair. Endonuclease that resolves HJ intermediates. Cleaves cruciform DNA by making single-stranded nicks across the HJ at symmetrical positions within the homologous arms, yielding a 5'-phosphate and a 3'-hydroxyl group; requires a central core of homology in the junction. The consensus cleavage sequence is 5'-(A/T)TT(C/G)-3'. Cleavage occurs on the 3'-side of the TT dinucleotide at the point of strand exchange. HJ branch migration catalyzed by RuvA-RuvB allows RuvC to scan DNA until it finds its consensus sequence, where it cleaves and resolves the cruciform DNA. This Pseudomonas putida (strain ATCC 47054 / DSM 6125 / CFBP 8728 / NCIMB 11950 / KT2440) protein is Crossover junction endodeoxyribonuclease RuvC.